The following is a 360-amino-acid chain: UPF0284 protein APE_2029.1 (360 aa).

It belongs to the UPF0284 family.

In Aeropyrum pernix (strain ATCC 700893 / DSM 11879 / JCM 9820 / NBRC 100138 / K1), this protein is UPF0284 protein APE_2029.1.